The primary structure comprises 360 residues: Cysteine proteinase 2 (360 aa).

Residues 1–19 form the signal peptide; it reads MVPRRLFVLAVVVLADTAA. Residues 20–142 constitute a propeptide, activation peptide; that stretch reads VVNSGFADSN…NHRMRAAAVA (123 aa). A glycan (N-linked (GlcNAc...) asparagine) is linked at N125. Cystine bridges form between C164–C207 and C198–C240. C167 is a catalytic residue. N256 carries N-linked (GlcNAc...) asparagine glycosylation. An intrachain disulfide couples C298 to C348. Active-site residues include H307 and N327.

The protein belongs to the peptidase C1 family. Expressed at the onset of germination.

The protein localises to the vacuole. Involved in the degradation of the storage protein zein. May play a role in proteolysis during emergencies. The chain is Cysteine proteinase 2 (CCP2) from Zea mays (Maize).